We begin with the raw amino-acid sequence, 645 residues long: ATP-dependent DNA helicase Rep (645 aa).

Residues 1 to 280 (MSLNFSQKNA…IKMEHNYRSS (280 aa)) enclose the UvrD-like helicase ATP-binding domain. Residues 22–29 (AGAGSGKT) and Arg-278 contribute to the ATP site. One can recognise a UvrD-like helicase C-terminal domain in the interval 281 to 562 (GRILKAANSL…QLMTLHASKG (282 aa)).

Belongs to the helicase family. UvrD subfamily. As to quaternary structure, homodimer.

It catalyses the reaction Couples ATP hydrolysis with the unwinding of duplex DNA by translocating in the 3'-5' direction.. It carries out the reaction ATP + H2O = ADP + phosphate + H(+). In terms of biological role, rep helicase is a single-stranded DNA-dependent ATPase involved in DNA replication; it can initiate unwinding at a nick in the DNA. It binds to the single-stranded DNA and acts in a progressive fashion along the DNA in the 3' to 5' direction. The polypeptide is ATP-dependent DNA helicase Rep (Buchnera aphidicola subsp. Acyrthosiphon pisum (strain APS) (Acyrthosiphon pisum symbiotic bacterium)).